The following is a 377-amino-acid chain: tRNA(Met) cytidine acetate ligase (377 aa).

Residues 7–20, Gly-100, Asn-153, and Arg-178 contribute to the ATP site; that span reads VTEYNPFHNGHLYH.

This sequence belongs to the TmcAL family.

Its subcellular location is the cytoplasm. The enzyme catalyses cytidine(34) in elongator tRNA(Met) + acetate + ATP = N(4)-acetylcytidine(34) in elongator tRNA(Met) + AMP + diphosphate. Functionally, catalyzes the formation of N(4)-acetylcytidine (ac(4)C) at the wobble position of elongator tRNA(Met), using acetate and ATP as substrates. First activates an acetate ion to form acetyladenylate (Ac-AMP) and then transfers the acetyl group to tRNA to form ac(4)C34. This is tRNA(Met) cytidine acetate ligase from Staphylococcus saprophyticus subsp. saprophyticus (strain ATCC 15305 / DSM 20229 / NCIMB 8711 / NCTC 7292 / S-41).